The chain runs to 150 residues: Large ribosomal subunit protein bL9 (150 aa).

It belongs to the bacterial ribosomal protein bL9 family.

Binds to the 23S rRNA. This is Large ribosomal subunit protein bL9 from Leptothrix cholodnii (strain ATCC 51168 / LMG 8142 / SP-6) (Leptothrix discophora (strain SP-6)).